The sequence spans 206 residues: Protein GET1 (206 aa).

The Lumenal segment spans residues 1–4 (MPSL). Residues 5–24 (LITVLFLNVIIYVINTVGAA) traverse the membrane as a helical segment. At 25–110 (TVDGLLWLLY…TFDMTIKIAR (86 aa)) the chain is on the cytoplasmic side. The stretch at 75–100 (AKLRRRHDKAMEAYEAKNNELTQSKS) forms a coiled coil. A helical membrane pass occupies residues 111 to 131 (WAATSGLMLFLQFWYSKTPIF). Residues 132–155 (TLPPGWIPWQVQWVLSFPRAPMGT) are Lumenal-facing. Residues 156–172 (VSIQIWGGACATVVALV) traverse the membrane as a helical segment. At 173 to 206 (GDAMRASLAYVSKPKIDRIKLGATMEGKEGKKRQ) the chain is on the cytoplasmic side.

Belongs to the WRB/GET1 family. Interacts with GET3.

The protein localises to the endoplasmic reticulum membrane. Functionally, required for the post-translational delivery of tail-anchored (TA) proteins to the endoplasmic reticulum. Acts as a membrane receptor for soluble GET3, which recognizes and selectively binds the transmembrane domain of TA proteins in the cytosol. In Ajellomyces capsulatus (strain NAm1 / WU24) (Darling's disease fungus), this protein is Protein GET1.